The primary structure comprises 484 residues: UDP-N-acetylmuramate--L-alanine ligase (484 aa).

Glycine 125–threonine 131 contacts ATP.

It belongs to the MurCDEF family.

It localises to the cytoplasm. The catalysed reaction is UDP-N-acetyl-alpha-D-muramate + L-alanine + ATP = UDP-N-acetyl-alpha-D-muramoyl-L-alanine + ADP + phosphate + H(+). Its pathway is cell wall biogenesis; peptidoglycan biosynthesis. Cell wall formation. In Buchnera aphidicola subsp. Acyrthosiphon pisum (strain 5A), this protein is UDP-N-acetylmuramate--L-alanine ligase.